A 498-amino-acid chain; its full sequence is NADP-dependent glyceraldehyde-3-phosphate dehydrogenase (498 aa).

Residues arginine 118 and 171 to 172 (NY) contribute to the substrate site. NADP(+)-binding residues include lysine 194, threonine 197, and aspartate 232. 247 to 251 (GGDTG) contributes to the NAD(+) binding site. Glutamate 266 functions as the Proton acceptor in the catalytic mechanism. Position 299–301 (299–301 (RCT)) interacts with substrate. Cysteine 300 (nucleophile) is an active-site residue. Residue glutamate 393 coordinates NADP(+). Position 453 (arginine 453) interacts with substrate.

It belongs to the aldehyde dehydrogenase family.

The protein resides in the cytoplasm. It catalyses the reaction D-glyceraldehyde 3-phosphate + NADP(+) + H2O = (2R)-3-phosphoglycerate + NADPH + 2 H(+). Its function is as follows. Important as a means of generating NADPH for biosynthetic reactions. In Zea mays (Maize), this protein is NADP-dependent glyceraldehyde-3-phosphate dehydrogenase (GPN1).